We begin with the raw amino-acid sequence, 1141 residues long: cGMP-inhibited 3',5'-cyclic phosphodiesterase 3A (1141 aa).

The disordered stretch occupies residues 1–41 (MAVRGEAAQDWAKPGLRGPSPAPVARGDHRCRGGSPSSPRG). The chain crosses the membrane as a helical span at residues 62-82 (SALCAGSLSVLLALLVRLVGG). The disordered stretch occupies residues 89–111 (ESSQEAAAEEEEEEGARGGVFPG). Transmembrane regions (helical) follow at residues 127-147 (LQPA…GLCL), 157-177 (AVAL…SLGV), 182-202 (LLSL…TWLV), 207-227 (LGVL…VSLE), and 229-249 (FKVA…LLLA). The interval 262–309 (PAPPRERFGSQSSARTKEEIPGWKRRRRSSSVVAGEMSGCGGKSHRRT) is disordered. The residue at position 310 (Ser-310) is a Phosphoserine. The span at 433–445 (RVSSTWTTTTSAT) shows a compositional bias: low complexity. The interval 433–479 (RVSSTWTTTTSATGLPTLEPAPVRRDRSASIKPHEAPSPSAVNPDSW) is disordered. Over residues 454–467 (PVRRDRSASIKPHE) the composition is skewed to basic and acidic residues. Phosphoserine occurs at positions 492, 520, 524, and 533. A disordered region spans residues 504 to 643 (HVKAKKQNRP…SDILQNDEEA (140 aa)). The segment covering 522 to 532 (VPSPSSSPPQG) has biased composition (pro residues). Residues 618–637 (TSQVTSDYETNNNSDSSDIL) show a composition bias toward polar residues. The tract at residues 669–1141 (KPILAPEPLV…EETLAPQPDL (473 aa)) is interaction with SLFN12. One can recognise a PDEase domain in the interval 674 to 1093 (PEPLVMDNLD…MMWKKVIEEE (420 aa)). His-752 acts as the Proton donor in catalysis. Residue His-752 coordinates AMP. Mn(2+) contacts are provided by His-756, His-836, Asp-837, and Asp-950. The AMP site is built by Asp-837, Asp-950, and Gln-1001. Asp-837 is a binding site for Mg(2+). Disordered regions lie at residues 1024-1062 (GKWV…EAPR) and 1098-1141 (GTEN…QPDL). The span at 1029 to 1046 (DSDDSGDTDDPEEEEEEA) shows a compositional bias: acidic residues. Ser-1033 is subject to Phosphoserine. Thr-1036 is modified (phosphothreonine). Positions 1098–1113 (GTENQAPDQAPLQHSS) are enriched in polar residues. Residue Lys-1120 forms a Glycyl lysine isopeptide (Lys-Gly) (interchain with G-Cter in SUMO2) linkage.

It belongs to the cyclic nucleotide phosphodiesterase family. PDE3 subfamily. Homodimer. Interacts with PDE3A; direct low affinity interaction which is stimulated by binding of 17beta-estradiol/E2 to PDE3A and that positively regulates the ribonuclease activity of SLFN12. Mn(2+) serves as cofactor. Requires Mg(2+) as cofactor.

Its subcellular location is the membrane. The protein localises to the cytoplasm. It localises to the cytosol. It carries out the reaction a nucleoside 3',5'-cyclic phosphate + H2O = a nucleoside 5'-phosphate + H(+). It catalyses the reaction 3',5'-cyclic AMP + H2O = AMP + H(+). The catalysed reaction is 3',5'-cyclic GMP + H2O = GMP + H(+). The enzyme catalyses 3',5'-cyclic UMP + H2O = UMP + H(+). Functionally, cyclic nucleotide phosphodiesterase with specificity for the second messengers cAMP and cGMP, which are key regulators of many important physiological processes. Also has activity toward cUMP. Independently of its catalytic activity it is part of an E2/17beta-estradiol-induced pro-apoptotic signaling pathway. E2 stabilizes the PDE3A/SLFN12 complex in the cytosol, promoting the dephosphorylation of SLFN12 and activating its pro-apoptotic ribosomal RNA/rRNA ribonuclease activity. This apoptotic pathway might be relevant in tissues with high concentration of E2 and be for instance involved in placenta remodeling. In Rattus norvegicus (Rat), this protein is cGMP-inhibited 3',5'-cyclic phosphodiesterase 3A.